Reading from the N-terminus, the 2626-residue chain is Unconventional myosin-IXa (2626 aa).

In terms of domain architecture, Ras-associating spans 14–112 (NEHTLRIYPG…YRFLLREKNL (99 aa)). One can recognise a Myosin motor domain in the interval 146 to 1017 (KDFDDLCSLP…ERQHLQDLLH (872 aa)). The helical transmembrane segment at 175–195 (IYTYVGSILIAINPFKFLPIY) threads the bilayer. Position 239–246 (239–246 (GESGSGKT)) interacts with ATP. Ser755 bears the Phosphoserine mark. Positions 908 to 919 (QAEPYFVKCIRS) are actin-binding. IQ domains lie at 1021-1041 (LRRI…QQFL), 1043-1072 (LRQA…EKDA), 1075-1104 (MASA…AAVI), 1116-1145 (RHRA…KIIL), and 1139-1168 (QRNK…ERLK). The segment at 1022–1163 (RRIILLQRWF…RARQRYKALK (142 aa)) is neck or regulatory domain. Residues 1164–2589 (EERLKETKLE…LKNVKNSPQK (1426 aa)) form a tail region. Positions 1221-1240 (RESSMDFSKESPDKQQERGR) are enriched in basic and acidic residues. Positions 1221–1276 (RESSMDFSKESPDKQQERGRSQSGTDLQGDVIVRQRPKSLEDLHQKKVGRAKRESR) are disordered. At Ser1243 the chain carries Phosphoserine. Thr1245 carries the post-translational modification Phosphothreonine. Ser1259 is subject to Phosphoserine. A coiled-coil region spans residues 1265–1292 (QKKVGRAKRESRRMRELEQAIFSLELLK). Residues 1266-1276 (KKVGRAKRESR) show a composition bias toward basic residues. 2 positions are modified to phosphoserine: Ser1300 and Ser1318. Residues 1360–1375 (PSTFTNPKFDSQNNAL) are compositionally biased toward polar residues. Residues 1360 to 1397 (PSTFTNPKFDSQNNALSASSETSSTFSGKGASSDSEHL) are disordered. Low complexity predominate over residues 1376 to 1386 (SASSETSSTFS). Residues 1493-1540 (TVLKKLEKLNIEKEKRQKQLQQQNEKEMMEQIRQQTDILEKERKAFKT) adopt a coiled-coil conformation. Disordered stretches follow at residues 1562–1602 (VERP…PPKD), 1618–1673 (SRTV…SRPI), 1689–1726 (GNPQ…RMAR), 1765–1784 (SELG…SEMT), and 1872–1907 (QYHP…KRGV). Composition is skewed to basic and acidic residues over residues 1620–1632 (TVKE…RMGT) and 1659–1669 (HRSDDPSREGS). The span at 1716–1726 (PAHKKKARMAR) shows a compositional bias: basic residues. Residues 1772–1784 (SLGQASHSDSEMT) are compositionally biased toward polar residues. Positions 1887-1899 (CRKEFKENKEPSP) are enriched in basic and acidic residues. Ser2016 is subject to Phosphoserine. The segment at 2067–2116 (GHMFKATQYSIPTYCEYCSSLIWIMDRASVCKLCKYACHKKCCLKTTAKC) adopts a Phorbol-ester/DAG-type zinc-finger fold. Positions 2131–2319 (VELSRLTSED…LIVVEQMNKY (189 aa)) constitute a Rho-GAP domain. The tract at residues 2365–2385 (SGKGRLHRGSHPNPSSPVIVR) is disordered. Ser2380 carries the phosphoserine modification. Positions 2408 to 2444 (TDQQQAAMQQEEKVLTEQIENLQKEKEELTFEMLVLE) form a coiled coil. The tract at residues 2449–2527 (DDEALESEAS…NTTSSHGTRK (79 aa)) is disordered. Positions 2504-2522 (SLDSVSSSVSSCLSNTTSS) are enriched in low complexity. Ser2542 bears the Phosphoserine mark. The disordered stretch occupies residues 2552-2614 (PLGQAKSLED…TVDSDCSSTQ (63 aa)).

It belongs to the TRAFAC class myosin-kinesin ATPase superfamily. Myosin family. Phosphorylated by ALPK1 following monosodium urate monohydrate (MSU)-induced inflammation. Expressed at high levels in brain, followed by testis and spleen. Expressed at very low levels, in kidney. Detected abundantly in brain and testis and at lower levels in adrenal gland, kidney, lung and spleen (at protein level). In adrenal gland it is mostly found in the medulla but not in the cortex. In brain, it is found in the cerebellum and the CA2-CA3 regions of the hippocampus.

It localises to the membrane. It is found in the cytoplasm. The protein resides in the synapse. Its subcellular location is the cell projection. The protein localises to the growth cone. Myosins are actin-based motor molecules with ATPase activity. Unconventional myosins serve in intracellular movements. Regulates Rho by stimulating it's GTPase activity in neurons. Required for the regulation of neurite branching and motor neuron axon guidance. In Rattus norvegicus (Rat), this protein is Unconventional myosin-IXa (Myo9a).